Reading from the N-terminus, the 446-residue chain is MSSMTPQEIVSELDRHIVGQNGAKRAVAIALRNRWRRQQVDASLRHEITPKNILMIGPTGVGKTEIARRLARLADAPFIKVEATKFTEVGYVGKDVDSIVRDLVEVAVKQTREADMKKVRVRAEDAAEDRILDVLIPPARGAGVDTARTGEPAGDSTARQVFRKKLREGQLDDKEIEIDLADARPQFEIMSPAGMEEMTEQLRGMFSQMGQERRRARKLKIAEAMKLLVEEEAAKLVNEEEVKTRALANAEQNGIVFIDEIDKVASRQEAGGADVSRQGVQRDLLPLVEGTTVSTKYGMVKTDHILFIASGAFHLAKPSDLIPELQGRFPIRVELTSLSVQDFEAILTQTHASLVKQYQALLETEGVTLDFTPEGITRLAHIAFEVNERTENIGARRLSTVMERLLDEVSYDATRLSGQTVVVDAGYVNARLQSLSQDEDLSRYIL.

ATP is bound by residues V18, 60 to 65 (GVGKTE), D259, E324, and R396.

Belongs to the ClpX chaperone family. HslU subfamily. As to quaternary structure, a double ring-shaped homohexamer of HslV is capped on each side by a ring-shaped HslU homohexamer. The assembly of the HslU/HslV complex is dependent on binding of ATP.

The protein resides in the cytoplasm. Its function is as follows. ATPase subunit of a proteasome-like degradation complex; this subunit has chaperone activity. The binding of ATP and its subsequent hydrolysis by HslU are essential for unfolding of protein substrates subsequently hydrolyzed by HslV. HslU recognizes the N-terminal part of its protein substrates and unfolds these before they are guided to HslV for hydrolysis. The sequence is that of ATP-dependent protease ATPase subunit HslU from Acidovorax sp. (strain JS42).